The primary structure comprises 205 residues: Molybdopterin synthase catalytic subunit (205 aa).

Residues 1 to 36 form a disordered region; it reads MQHPTLQPEVDPNPVVSSSSSSSSSNPLPAHLNPAN. Substrate contacts are provided by residues 146–147, Lys162, and 169–171; these read HR and KRE. The segment at 179–205 is disordered; it reads GEGEGEWRANRDTDSQGNCRGDKVAEG. Positions 183–205 are enriched in basic and acidic residues; that stretch reads GEWRANRDTDSQGNCRGDKVAEG.

Belongs to the MoaE family. MOCS2B subfamily. In terms of assembly, heterotetramer; composed of 2 small (MOCS2A) and 2 large (MOCS2B) subunits.

Its subcellular location is the cytoplasm. The catalysed reaction is 2 [molybdopterin-synthase sulfur-carrier protein]-C-terminal-Gly-aminoethanethioate + cyclic pyranopterin phosphate + H2O = molybdopterin + 2 [molybdopterin-synthase sulfur-carrier protein]-C-terminal Gly-Gly + 2 H(+). The protein operates within cofactor biosynthesis; molybdopterin biosynthesis. Its function is as follows. Catalytic subunit of the molybdopterin synthase complex, a complex that catalyzes the conversion of precursor Z into molybdopterin. Acts by mediating the incorporation of 2 sulfur atoms from thiocarboxylated MOCS2A into precursor Z to generate a dithiolene group. This chain is Molybdopterin synthase catalytic subunit, found in Ajellomyces capsulatus (strain NAm1 / WU24) (Darling's disease fungus).